A 495-amino-acid polypeptide reads, in one-letter code: 1-aminocyclopropane-1-carboxylate synthase 6 (495 aa).

Residues Glu-58 and Tyr-96 each contribute to the substrate site. Lys-280 is subject to N6-(pyridoxal phosphate)lysine. Ser-480, Ser-483, and Ser-488 each carry phosphoserine.

Belongs to the class-I pyridoxal-phosphate-dependent aminotransferase family. In terms of assembly, homodimer and heterodimer. In vivo, the relevance of heterodimerization with other ACS enzymes is however unsure. Interacts with GRF3. The cofactor is pyridoxal 5'-phosphate. In terms of processing, phosphorylated on serine residue by MAP kinase (MPK6). May be processed at its C-terminus. In terms of tissue distribution, expressed in roots and flowers.

It carries out the reaction S-adenosyl-L-methionine = 1-aminocyclopropane-1-carboxylate + S-methyl-5'-thioadenosine + H(+). It functions in the pathway alkene biosynthesis; ethylene biosynthesis via S-adenosyl-L-methionine; ethylene from S-adenosyl-L-methionine: step 1/2. Its function is as follows. 1-aminocyclopropane-1-carboxylate synthase (ACS) enzymes catalyze the conversion of S-adenosyl-L-methionine (SAM) into 1-aminocyclopropane-1-carboxylate (ACC), a direct precursor of ethylene. Involved in bacterial flagellin-induced ethylene production. The chain is 1-aminocyclopropane-1-carboxylate synthase 6 (ACS6) from Arabidopsis thaliana (Mouse-ear cress).